Reading from the N-terminus, the 314-residue chain is L-lactate dehydrogenase 2 (314 aa).

NAD(+) contacts are provided by residues Val16, Asp37, Lys42, Tyr68, and 82–83 (GV). Substrate is bound by residues Gln85 and Arg91. NAD(+)-binding positions include Ser104, 121-123 (ASN), and Thr146. 123-126 (NPVD) contributes to the substrate binding site. 151 to 154 (DTTR) is a substrate binding site. Positions 156 and 171 each coordinate beta-D-fructose 1,6-bisphosphate. His178 (proton acceptor) is an active-site residue. Tyr223 carries the phosphotyrosine modification. Residue Thr232 coordinates substrate.

Belongs to the LDH/MDH superfamily. LDH family. In terms of assembly, homotetramer.

The protein localises to the cytoplasm. It catalyses the reaction (S)-lactate + NAD(+) = pyruvate + NADH + H(+). The protein operates within fermentation; pyruvate fermentation to lactate; (S)-lactate from pyruvate: step 1/1. With respect to regulation, allosterically activated by fructose 1,6-bisphosphate (FBP). Catalyzes the conversion of lactate to pyruvate. In Lactococcus lactis subsp. lactis (strain IL1403) (Streptococcus lactis), this protein is L-lactate dehydrogenase 2.